The primary structure comprises 149 residues: Ribosome maturation factor RimP (149 aa).

This sequence belongs to the RimP family.

The protein localises to the cytoplasm. Functionally, required for maturation of 30S ribosomal subunits. In Neisseria meningitidis serogroup A / serotype 4A (strain DSM 15465 / Z2491), this protein is Ribosome maturation factor RimP.